Reading from the N-terminus, the 216-residue chain is Nucleoside triphosphate pyrophosphatase (216 aa).

Residue Asp-82 is the Proton acceptor of the active site.

This sequence belongs to the Maf family. A divalent metal cation serves as cofactor.

It localises to the cytoplasm. It carries out the reaction a ribonucleoside 5'-triphosphate + H2O = a ribonucleoside 5'-phosphate + diphosphate + H(+). It catalyses the reaction a 2'-deoxyribonucleoside 5'-triphosphate + H2O = a 2'-deoxyribonucleoside 5'-phosphate + diphosphate + H(+). In terms of biological role, nucleoside triphosphate pyrophosphatase. May have a dual role in cell division arrest and in preventing the incorporation of modified nucleotides into cellular nucleic acids. This is Nucleoside triphosphate pyrophosphatase from Mycobacterium marinum (strain ATCC BAA-535 / M).